Reading from the N-terminus, the 217-residue chain is Large ribosomal subunit protein uL1 (217 aa).

Belongs to the universal ribosomal protein uL1 family. In terms of assembly, part of the 50S ribosomal subunit.

In terms of biological role, binds directly to 23S rRNA. The L1 stalk is quite mobile in the ribosome, and is involved in E site tRNA release. Its function is as follows. Protein L1 is also a translational repressor protein, it controls the translation of the L11 operon by binding to its mRNA. The sequence is that of Large ribosomal subunit protein uL1 from Wolbachia pipientis wMel.